The following is a 412-amino-acid chain: Putative potassium channel protein RPA4233 (412 aa).

The next 5 membrane-spanning stretches (helical) occupy residues 35–55, 65–85, 164–184, 202–222, and 225–245; these read FIVF…VPAM, ALEL…IWIA, LMAC…AMHI, WWAI…ATGI, and MVAS…VGIV. Positions 210–215 match the Selectivity filter motif; that stretch reads TIGYGD. An a nucleoside 3',5'-cyclic phosphate-binding site is contributed by 270 to 388; that stretch reads LFSHLTAGDI…RKINQIVEGR (119 aa).

The protein belongs to the potassium channel family.

The protein localises to the cell membrane. The sequence is that of Putative potassium channel protein RPA4233 from Rhodopseudomonas palustris (strain ATCC BAA-98 / CGA009).